Reading from the N-terminus, the 354-residue chain is Histidinol-phosphate aminotransferase (354 aa).

A compositionally biased stretch (basic and acidic residues) spans 1 to 11 (MKSFLSDKAKS). Residues 1–33 (MKSFLSDKAKSIEPYTPGEQPKDKNYIKLNTNE) are disordered. An N6-(pyridoxal phosphate)lysine modification is found at Lys-211.

This sequence belongs to the class-II pyridoxal-phosphate-dependent aminotransferase family. Histidinol-phosphate aminotransferase subfamily. Homodimer. The cofactor is pyridoxal 5'-phosphate.

The enzyme catalyses L-histidinol phosphate + 2-oxoglutarate = 3-(imidazol-4-yl)-2-oxopropyl phosphate + L-glutamate. It functions in the pathway amino-acid biosynthesis; L-histidine biosynthesis; L-histidine from 5-phospho-alpha-D-ribose 1-diphosphate: step 7/9. The protein is Histidinol-phosphate aminotransferase of Brachyspira hyodysenteriae (strain ATCC 49526 / WA1).